Reading from the N-terminus, the 142-residue chain is Ribosome-binding factor A (142 aa).

The tract at residues 119–142 (EAKQKQHGVETDAEQGETKDEGDK) is disordered.

It belongs to the RbfA family. As to quaternary structure, monomer. Binds 30S ribosomal subunits, but not 50S ribosomal subunits or 70S ribosomes.

It is found in the cytoplasm. In terms of biological role, one of several proteins that assist in the late maturation steps of the functional core of the 30S ribosomal subunit. Associates with free 30S ribosomal subunits (but not with 30S subunits that are part of 70S ribosomes or polysomes). Required for efficient processing of 16S rRNA. May interact with the 5'-terminal helix region of 16S rRNA. This chain is Ribosome-binding factor A, found in Shewanella halifaxensis (strain HAW-EB4).